A 108-amino-acid chain; its full sequence is UPF0251 protein PF0620 (108 aa).

It belongs to the UPF0251 family.

The polypeptide is UPF0251 protein PF0620 (Pyrococcus furiosus (strain ATCC 43587 / DSM 3638 / JCM 8422 / Vc1)).